The chain runs to 157 residues: Transcriptional repressor NrdR (157 aa).

The segment at 3-34 is a zinc-finger region; it reads CPFCNAEDTKVIDSRLVEEGTQVRRRRECLKC. In terms of domain architecture, ATP-cone spans 49 to 139; sequence PRIIKRDGRR…VYRSFQDINA (91 aa).

The protein belongs to the NrdR family. Requires Zn(2+) as cofactor.

Its function is as follows. Negatively regulates transcription of bacterial ribonucleotide reductase nrd genes and operons by binding to NrdR-boxes. This chain is Transcriptional repressor NrdR, found in Coxiella burnetii (strain CbuK_Q154) (Coxiella burnetii (strain Q154)).